A 648-amino-acid chain; its full sequence is ATP-dependent zinc metalloprotease FtsH 4 (648 aa).

Topologically, residues M1–K6 are cytoplasmic. The chain crosses the membrane as a helical span at residues T7–P27. Residues D28–P111 are Periplasmic-facing. A helical membrane pass occupies residues F112–L132. The Cytoplasmic segment spans residues F133–T648. G205–T212 provides a ligand contact to ATP. H427 serves as a coordination point for Zn(2+). E428 is an active-site residue. Zn(2+) is bound by residues H431 and D504. Residues Y622–T648 are disordered.

This sequence in the central section; belongs to the AAA ATPase family. It in the C-terminal section; belongs to the peptidase M41 family. As to quaternary structure, homohexamer. Zn(2+) serves as cofactor.

The protein resides in the cell inner membrane. Functionally, acts as a processive, ATP-dependent zinc metallopeptidase for both cytoplasmic and membrane proteins. Plays a role in the quality control of integral membrane proteins. The sequence is that of ATP-dependent zinc metalloprotease FtsH 4 from Sorangium cellulosum (strain So ce56) (Polyangium cellulosum (strain So ce56)).